The following is a 130-amino-acid chain: DNA-directed RNA polymerase subunit omega (130 aa).

Residues 80–130 form a disordered region; the sequence is PEPDTVPLIGSAGASVDADDTEVAPERMTEEELLKGLEGLAPPEEQPEEDE. A compositionally biased stretch (basic and acidic residues) spans 103 to 114; sequence APERMTEEELLK.

It belongs to the RNA polymerase subunit omega family. As to quaternary structure, the RNAP catalytic core consists of 2 alpha, 1 beta, 1 beta' and 1 omega subunit. When a sigma factor is associated with the core the holoenzyme is formed, which can initiate transcription.

It carries out the reaction RNA(n) + a ribonucleoside 5'-triphosphate = RNA(n+1) + diphosphate. Its function is as follows. Promotes RNA polymerase assembly. Latches the N- and C-terminal regions of the beta' subunit thereby facilitating its interaction with the beta and alpha subunits. The protein is DNA-directed RNA polymerase subunit omega of Rhodopseudomonas palustris (strain BisB18).